We begin with the raw amino-acid sequence, 125 residues long: MKNFLVKTIANAGALAVAVWLLDKITLTGGSTGEKTLTLIVVALVFGLVNMVVKPIVQVLTFPLFILTLGLFTLVVNALMLLLTSWVADKLDLSFHVDGFWTAVLGGLIVSIVSWALNAFLPDGD.

4 helical membrane passes run Ile9–Gly29, Gly33–Val53, Ile56–Val76, and Phe100–Phe120.

It localises to the cell membrane. This is an uncharacterized protein from Streptomyces coelicolor (strain ATCC BAA-471 / A3(2) / M145).